Here is a 45-residue protein sequence, read N- to C-terminus: Large ribosomal subunit protein bL34 (45 aa).

Residues 1–20 show a composition bias toward basic residues; sequence MSKRTYQPNKRKRLKTHGFR. Residues 1–45 form a disordered region; the sequence is MSKRTYQPNKRKRLKTHGFRSRMSTASGRRIISCRRRKNRETLTA.

It belongs to the bacterial ribosomal protein bL34 family.

The sequence is that of Large ribosomal subunit protein bL34 from Tropheryma whipplei (strain Twist) (Whipple's bacillus).